The following is a 2636-amino-acid chain: Ankyrin repeat and KH domain-containing protein CBG24701 (2636 aa).

11 ANK repeats span residues 252–281, 286–317, 361–390, 435–464, 468–500, 505–534, 536–564, 566–595, 598–627, 632–661, and 665–695; these read SRIT…DPNA, NCNT…KVDV, NDNS…KNQQ, NLPS…RIDE, HKNT…DVNA, SGDT…DLTT, KITP…TIPQ, QLSR…DLNF, DERT…SVNF, NDAT…DPML, and DGVN…NMDL. 3 disordered regions span residues 994-1030, 1172-1191, and 1230-1268; these read PIDA…TTIE, KSNR…KKGK, and NNTQ…VIDK. The segment covering 1006-1030 has biased composition (polar residues); that stretch reads QQTGPKTTSLTTPQPDESNGATTIE. Low complexity predominate over residues 1233–1245; sequence QVQQQQGQQQQGQ. The segment covering 1249-1260 has biased composition (basic and acidic residues); the sequence is THSEGDGTERAK. ANK repeat units follow at residues 1273-1302, 1306-1335, 1340-1369, 1373-1402, 1408-1437, 1447-1476, 1480-1509, 1515-1546, 1548-1577, and 1581-1610; these read TLET…NIEH, KGFT…AIEA, TKDT…NKEH, SDYT…EINS, LGIS…DINA, YRNT…NVEH, TGLT…DPNA, TKDT…DIRN, KGCS…DTDM, and RKMS…QFPN. The stretch at 1638-1696 forms a coiled coil; sequence RNAKKAQAETAEETANRLLQLIDDEKERDINKKQKIKDKKKQKKEAKKKFQAEQEQLSA. The interval 1669–1857 is disordered; it reads KKQKIKDKKK…SSISERQHSW (189 aa). Positions 1670–1686 are enriched in basic residues; it reads KQKIKDKKKQKKEAKKK. A compositionally biased stretch (pro residues) spans 1698–1708; that stretch reads PSKPEPVVAPE. Residues 1709–1722 are compositionally biased toward acidic residues; the sequence is PEPEPETEPVEEPA. Positions 1811–1829 are enriched in basic and acidic residues; it reads DWQKAGKEGKKVRPKREGR. The segment covering 1832–1851 has biased composition (polar residues); the sequence is APSSAGSSQAKHRSNTSSIS. Positions 1864-1929 constitute a KH domain; sequence VKAYEFTVPG…DVVSMAVNII (66 aa). Disordered regions lie at residues 1980–2182, 2196–2221, 2269–2292, 2301–2320, 2352–2417, 2444–2465, and 2539–2636; these read SASI…SLPS, FKPT…STAS, NSTA…SNDF, SNQK…NSQL, SQSS…TQQQ, MHRQ…NPYY, and GMMQ…SSRM. A compositionally biased stretch (polar residues) spans 1994–2008; sequence SQCNRSSKSHGNQAT. Low complexity predominate over residues 2025-2045; sequence TPPTQTQTKQQPTPSPQVQQP. Over residues 2057 to 2083 the composition is skewed to polar residues; it reads SLAQSSVPQATENVTKPTQTPPASVQQ. 2 stretches are compositionally biased toward low complexity: residues 2099 to 2119 and 2139 to 2148; these read QVVQ…QRPQ and QQHMQQIQQQ. Over residues 2167-2179 the composition is skewed to pro residues; it reads PGPPVQPQTPPQS. Over residues 2269–2280 the composition is skewed to low complexity; it reads NSTASSLNTATT. Positions 2281–2292 are enriched in polar residues; sequence KNDTSDWGSNDF. Low complexity-rich tracts occupy residues 2361–2373 and 2391–2417; these read QHQQ…MQDP and PQQF…TQQQ. Composition is skewed to polar residues over residues 2449–2465, 2565–2574, and 2583–2595; these read NSSS…NPYY, RSASGSSQNR, and QQPQ…TQAD. A compositionally biased stretch (low complexity) spans 2599 to 2615; it reads RLLLQQQQQQRSSQQQQ. Residues 2616 to 2636 are compositionally biased toward polar residues; that stretch reads NPTNQGLPQKWSNTWNSSSRM.

Belongs to the mask family.

It localises to the cytoplasm. In Caenorhabditis briggsae, this protein is Ankyrin repeat and KH domain-containing protein CBG24701.